The chain runs to 1135 residues: Potassium channel subfamily T member 2 (1135 aa).

Residues 1-63 (MVDLESEVPP…KNQRSSLRIR (63 aa)) are Cytoplasmic-facing. The helical transmembrane segment at 64–84 (LFNFSLKLLSCLLYIIRVLLE) threads the bilayer. At 85–101 (NPSQGNEWSHIFWVNRS) the chain is on the extracellular side. A glycan (N-linked (GlcNAc...) asparagine) is linked at Asn99. The helical transmembrane segment at 102-122 (LPLWGLQVSVALISLFETILL) threads the bilayer. The Cytoplasmic segment spans residues 123–137 (GYLSYKGNIWEQILR). A helical membrane pass occupies residues 138–158 (IPFILEIINAVPFIISIFWPS). Over 159 to 164 (LRNLFV) the chain is Extracellular. Residues 165–185 (PVFLNCWLAKHALENMINDLH) traverse the membrane as a helical segment. Topologically, residues 186-198 (RAIQRTQSAMFNQ) are cytoplasmic. The helical transmembrane segment at 199–219 (VLILISTLLCLIFTCICGIQH) threads the bilayer. The Extracellular portion of the chain corresponds to 220–228 (LERIGKKLN). Residues 229 to 249 (LFDSLYFCIVTFSTVGFGDVT) constitute an intramembrane region (pore-forming). Over 250–256 (PETWSSK) the chain is Extracellular. Residues 257–277 (LFVVAMICVALVVLPIQFEQL) traverse the membrane as a helical segment. The Cytoplasmic segment spans residues 278 to 1135 (AYLWMERQKS…GQDSREETQL (858 aa)). RCK N-terminal domains lie at 299-435 (EKHV…DHVV) and 718-858 (NKLI…CYSL). 3 disordered regions span residues 977–1010 (VEEWEDTKDSKEQGHHRSNHRNSTSSDQSDHPLL), 1017–1036 (WARRLSRKGPKHSGKTAEKI), and 1113–1135 (SEPSRRNSICNVTGQDSREETQL). Residues 1017 to 1030 (WARRLSRKGPKHSG) are compositionally biased toward basic residues. The segment covering 1118–1127 (RNSICNVTGQ) has biased composition (polar residues).

The protein belongs to the potassium channel family. Calcium-activated (TC 1.A.1.3) subfamily. KCa4.2/KCNT2 sub-subfamily. As to quaternary structure, homotetramer. Forms heteromeric channels with KCNT1; these heterodimer channels differ from the homomers in their unitary conductance, kinetic behavior, subcellular localization, and response to activation of protein kinase C. Post-translationally, phosphorylated by protein kinase C. Phosphorylation of the C-terminal domain inhibits channel activity.

It localises to the cell membrane. The catalysed reaction is K(+)(in) = K(+)(out). Are normally in a closed state unless activated by an increase in intracellular Na(+) and Cl(-). Inhibited upon stimulation of G-protein coupled receptors, such as CHRM1 and GRM1. There is conflicting data about the effect of ATP on KNCT2 channels activity. Intracellular ATP was initially report to inhibit the channel activity. However, others studies conclude that KNCT2 channels are not inhibited by intracellular ATP. Sodium-activated and chloride-activated potassium channel. Produces rapidly activating outward rectifier K(+) currents. Contributes to regulate neuronal excitability. This Homo sapiens (Human) protein is Potassium channel subfamily T member 2 (KCNT2).